A 73-amino-acid polypeptide reads, in one-letter code: Dipeptidyl peptidase 3 (73 aa).

Belongs to the peptidase M49 family. Requires Zn(2+) as cofactor.

The protein localises to the membrane. The catalysed reaction is Release of an N-terminal dipeptide from a peptide comprising four or more residues, with broad specificity. Also acts on dipeptidyl 2-naphthylamides.. Its function is as follows. Degrades neuropeptide proctolin (RYLPT) by cleavage between Tyr and Leu residues. In Blaberus craniifer (Death's head cockroach), this protein is Dipeptidyl peptidase 3.